A 358-amino-acid chain; its full sequence is 3-isopropylmalate dehydrogenase (358 aa).

77–90 is a binding site for NAD(+); it reads GPKWDNLPIDQRPE. Substrate is bound by residues R98, R108, R137, and D221. Mg(2+) is bound by residues D221, D245, and D249. NAD(+) is bound at residue 279–291; it reads GSAPDIAHLNIAN.

Belongs to the isocitrate and isopropylmalate dehydrogenases family. LeuB type 1 subfamily. Homodimer. Mg(2+) is required as a cofactor. The cofactor is Mn(2+).

The protein localises to the cytoplasm. It carries out the reaction (2R,3S)-3-isopropylmalate + NAD(+) = 4-methyl-2-oxopentanoate + CO2 + NADH. Its pathway is amino-acid biosynthesis; L-leucine biosynthesis; L-leucine from 3-methyl-2-oxobutanoate: step 3/4. Catalyzes the oxidation of 3-carboxy-2-hydroxy-4-methylpentanoate (3-isopropylmalate) to 3-carboxy-4-methyl-2-oxopentanoate. The product decarboxylates to 4-methyl-2 oxopentanoate. This is 3-isopropylmalate dehydrogenase from Campylobacter jejuni (strain RM1221).